Reading from the N-terminus, the 555-residue chain is Synaptotagmin-14 (555 aa).

The Extracellular portion of the chain corresponds to 1–24 (MAIEGGERTCGVHELICIRKVSPE). Residues 25–47 (AVGFLSAVGVFIVLMLLLFLYIN) form a helical; Signal-anchor for type III membrane protein membrane-spanning segment. Residues 48-555 (KKFCFENVGG…VCRWHALLES (508 aa)) lie on the Cytoplasmic side of the membrane. Disordered stretches follow at residues 76 to 97 (YNSY…EALG), 157 to 179 (TPPL…HLSC), and 205 to 258 (CPSE…PEPE). Basic and acidic residues predominate over residues 211–224 (TGHEAESYHNKGYE). C2 domains lie at 260-379 (KYGT…SLPV) and 415-550 (SVPE…CRWH).

This sequence belongs to the synaptotagmin family. Homodimer. Can also form heterodimers. As to expression, expressed in heart and testis. Expressed in brain (especially in the cerebellum).

It is found in the membrane. Functionally, may be involved in the trafficking and exocytosis of secretory vesicles in non-neuronal tissues. Is Ca(2+)-independent. The protein is Synaptotagmin-14 (Syt14) of Mus musculus (Mouse).